We begin with the raw amino-acid sequence, 1111 residues long: Zinc finger protein GLI1 (1111 aa).

The tract at residues 52–78 is disordered; that stretch reads GYGAARETSSCTEGSLFPPPPPPRSSV. The tract at residues 123 to 127 is interaction with SUFU; it reads SYGHL. 5 consecutive C2H2-type zinc fingers follow at residues 238 to 263, 271 to 298, 304 to 328, 334 to 359, and 365 to 390; these read TDCR…NSEH, FVCH…MRRH, HKCT…LRSH, YMCE…NRTH, and YVCK…KTVH. Positions 286 to 294 are interaction with DNA; sequence KAQYMLVVH. Interaction with DNA regions lie at residues 348–353 and 378–384; these read ASDRAK and DPSSLRK. Residues 378-487 are disordered; it reads DPSSLRKHVK…EDLSSLDEGP (110 aa). The span at 416–431 shows a compositional bias: basic and acidic residues; the sequence is EPKREREGGSGREESR. Residues 439–465 are compositionally biased toward polar residues; sequence MPQQSPGAQSSCSSDHSPAGSAANTDS. K520 is subject to N6-acetyllysine. Disordered stretches follow at residues 528–583, 598–649, 673–692, and 832–891; these read GAPV…LPGL, ARGS…RAAD, TGRN…QPPS, and PCLN…SSHS. Over residues 546–562 the composition is skewed to low complexity; sequence SSSSSMSSAYTVSRRSS. A compositionally biased stretch (basic and acidic residues) spans 640–649; it reads RASDPARAAD. Pro residues predominate over residues 855 to 870; that stretch reads LPQPQYPQSGPYPQPP. Residue K1008 forms a Glycyl lysine isopeptide (Lys-Gly) (interchain with G-Cter in SUMO2) linkage. The interval 1064–1093 is disordered; the sequence is LSPPLSHEQGDSSKNTPSPSGPPNMAVGNM.

Belongs to the GLI C2H2-type zinc-finger protein family. As to quaternary structure, interacts with KIF7. Interacts with STK36. Interacts with ZIC1; the interaction enhances transcription activation. Interacts with SUFU; this inhibits transcriptional activation by GLI1. Post-translationally, phosphorylated in vitro by ULK3. In terms of processing, acetylation at Lys-520 down-regulates transcriptional activity. Deacetylated by HDAC1. Ubiquitinated by the CRL2(FEM1B) complex, suppressing GLI1 transcriptional activator activity.

The protein localises to the cytoplasm. Its subcellular location is the nucleus. Its function is as follows. Acts as a transcriptional activator. Binds to the DNA consensus sequence 5'-GACCACCCA-3'. Regulates the transcription of specific genes during normal development. Plays a role in craniofacial development and digital development, as well as development of the central nervous system and gastrointestinal tract. Mediates SHH signaling. Plays a role in cell proliferation and differentiation via its role in SHH signaling. The sequence is that of Zinc finger protein GLI1 (Gli1) from Mus musculus (Mouse).